A 622-amino-acid polypeptide reads, in one-letter code: Chaperone protein HscA homolog (622 aa).

Belongs to the heat shock protein 70 family.

Functionally, chaperone involved in the maturation of iron-sulfur cluster-containing proteins. Has a low intrinsic ATPase activity which is markedly stimulated by HscB. This chain is Chaperone protein HscA homolog, found in Burkholderia pseudomallei (strain 668).